The sequence spans 174 residues: Transcriptional repressor NrdR (174 aa).

A zinc finger lies at 3–34 (CPFCQHSDTRVIDSRVSEDGTTIRRRRECEAC). The region spanning 49 to 139 (PTVVKSDGGR…VYRSFQDVAD (91 aa)) is the ATP-cone domain.

This sequence belongs to the NrdR family. Zn(2+) serves as cofactor.

Its function is as follows. Negatively regulates transcription of bacterial ribonucleotide reductase nrd genes and operons by binding to NrdR-boxes. This Xanthomonas oryzae pv. oryzae (strain MAFF 311018) protein is Transcriptional repressor NrdR.